We begin with the raw amino-acid sequence, 290 residues long: MEPDLNEEESERIRTSRNRRSLEHRRNSLLPFQWKATNNSRWMAQVVASEFSLVAFLLLLVMVFSKKWLYPSKSRFHQRYPQNVTKRVYTSIHSMSTGLLYICVSKSCPSSDNGEDNFKMWTIHPVFGVAKISFTLAIGLGFVLTTWLHLPYLPCLQRMPFFGLIGIILSFCEVTLIFLTLLLFPVNLWIYELRKNISVPIGWSYFIGWLVLILYFTCGILCYLNHKNYWSLIMSSTTINTACSSLGPESLVSPSQTPSSQENSQESPKDDQKPSSPDKVVSPPQPDTTG.

Serine 28 is modified (phosphoserine). The next 4 helical transmembrane spans lie at 44–64 (AQVVASEFSLVAFLLLLVMVF), 125–145 (PVFGVAKISFTLAIGLGFVLT), 164–184 (LIGIILSFCEVTLIFLTLLLF), and 201–221 (IGWSYFIGWLVLILYFTCGIL). A disordered region spans residues 247–290 (GPESLVSPSQTPSSQENSQESPKDDQKPSSPDKVVSPPQPDTTG). Positions 252–266 (VSPSQTPSSQENSQE) are enriched in polar residues.

As to expression, expressed in testis.

It localises to the membrane. Its function is as follows. Component of the outer dense fibers (ODF) of spermatozoa which could be involved in sperm tail structure, sperm movement and general organization of cellular cytoskeleton. This is Outer dense fiber protein 4 (Odf4) from Mus musculus (Mouse).